Reading from the N-terminus, the 127-residue chain is DNA-directed RNA polymerases I, II, and III subunit RPABC2 (127 aa).

Residues 1–34 (MSDNEDNFDGDDFDDVEEDEGLDDLENAEEEGQE) show a composition bias toward acidic residues. Residues 1–53 (MSDNEDNFDGDDFDDVEEDEGLDDLENAEEEGQENVEILPSGERPQANQKRIT) form a disordered region. Serine 2 is modified (N-acetylserine). Residue serine 2 is modified to Phosphoserine; by CK2.

The protein belongs to the archaeal Rpo6/eukaryotic RPB6 RNA polymerase subunit family. In terms of assembly, component of the RNA polymerase I (Pol I), RNA polymerase II (Pol II) and RNA polymerase III (Pol III) complexes consisting of at least 13, 12 and 17 subunits, respectively. Pol I complex consists of a ten-subunit catalytic core composed of POLR1A/RPA1, POLR1B/RPA2, POLR1C/RPAC1, POLR1D/RPAC2, POLR1H/RPA12, POLR2E/RPABC1, POLR2F/RPABC2, POLR2H/RPABC3, POLR2K/RPABC4 and POLR2L/RPABC5; a mobile stalk subunit POLR1F/RPA43 protruding from the core and additional subunits homologous to general transcription factors POLR1E/RPA49 and POLR1G/RPA34. Part of Pol I pre-initiation complex (PIC), in which Pol I core assembles with RRN3 and promoter-bound UTBF and SL1/TIF-IB complex. Pol II complex contains a ten-subunit catalytic core composed of POLR2A/RPB1, POLR2B/RPB2, POLR2C/RPB3, POLR2I/RPB9, POLR2J/RPB11, POLR2E/RPABC1, POLR2F/RPABC2, POLR2H/RPABC3, POLR2K/RPABC4 and POLR2L/RPABC5 and a mobile stalk composed of two subunits POLR2D/RPB4 and POLR2G/RPB7. Part of Pol II(G) complex, in which Pol II core associates with an additional subunit POLR2M; unlike conventional Pol II, Pol II(G) functions as a transcriptional repressor. Part of TBP-based Pol II pre-initiation complex (PIC), in which Pol II core assembles with general transcription factors and other specific initiation factors including GTF2E1, GTF2E2, GTF2F1, GTF2F2, TCEA1, ERCC2, ERCC3, GTF2H2, GTF2H3, GTF2H4, GTF2H5, GTF2A1, GTF2A2, GTF2B and TBP; this large multi-subunit PIC complex mediates DNA unwinding and targets Pol II core to the transcription start site where the first phosphodiester bond forms. Pol III complex consists of a ten-subunit catalytic core composed of POLR3A/RPC1, POLR3B/RPC2, POLR1C/RPAC1, POLR1D/RPAC2, POLR3K/RPC10, POLR2E/RPABC1, POLR2F/RPABC2, POLR2H/RPABC3, POLR2K/RPABC4 and POLR2L/RPABC5; a mobile stalk composed of two subunits POLR3H/RPC8 and CRCP/RPC9, protruding from the core and functioning primarily in transcription initiation; and additional subunits homologous to general transcription factors of the RNA polymerase II machinery, POLR3C/RPC3-POLR3F/RPC6-POLR3G/RPC7 heterotrimer required for transcription initiation and POLR3D/RPC4-POLR3E/RPC5 heterodimer involved in both transcription initiation and termination.

It is found in the nucleus. The protein localises to the nucleolus. Its function is as follows. DNA-dependent RNA polymerase catalyzes the transcription of DNA into RNA using the four ribonucleoside triphosphates as substrates. Common component of RNA polymerases I, II, and III which synthesize ribosomal RNA precursors, mRNA precursors and many functional non-coding RNAs, and small RNAs, such as 5S rRNA and tRNAs, respectively. Pol II is the central component of the basal RNA polymerase II transcription machinery. Pols are composed of mobile elements that move relative to each other. In Pol II, POLR2F/RPABC2 is part of the clamp element and together with parts of POLR2A/RPB1 and POLR2B/RPB2 forms a pocket to which the POLR2D/RPB4-POLR2G/RPB7 subcomplex binds. This Mus musculus (Mouse) protein is DNA-directed RNA polymerases I, II, and III subunit RPABC2.